Reading from the N-terminus, the 607-residue chain is Elongation factor 4 (607 aa).

The tr-type G domain occupies S11–T193. Residues D23–T28 and N140–D143 contribute to the GTP site.

The protein belongs to the TRAFAC class translation factor GTPase superfamily. Classic translation factor GTPase family. LepA subfamily.

The protein localises to the cell membrane. It catalyses the reaction GTP + H2O = GDP + phosphate + H(+). Required for accurate and efficient protein synthesis under certain stress conditions. May act as a fidelity factor of the translation reaction, by catalyzing a one-codon backward translocation of tRNAs on improperly translocated ribosomes. Back-translocation proceeds from a post-translocation (POST) complex to a pre-translocation (PRE) complex, thus giving elongation factor G a second chance to translocate the tRNAs correctly. Binds to ribosomes in a GTP-dependent manner. In Bacillus anthracis (strain CDC 684 / NRRL 3495), this protein is Elongation factor 4.